A 250-amino-acid polypeptide reads, in one-letter code: UDP-2,3-diacylglucosamine hydrolase (250 aa).

Asp-8, His-10, Asp-41, Asn-79, and His-114 together coordinate Mn(2+). 79 to 80 (NR) lines the substrate pocket. Substrate contacts are provided by Asp-122, Ser-160, Asp-172, Gln-175, and His-203. Positions 203 and 205 each coordinate Mn(2+).

Belongs to the LpxH family. The cofactor is Mn(2+).

It is found in the cell inner membrane. It catalyses the reaction UDP-2-N,3-O-bis[(3R)-3-hydroxytetradecanoyl]-alpha-D-glucosamine + H2O = 2-N,3-O-bis[(3R)-3-hydroxytetradecanoyl]-alpha-D-glucosaminyl 1-phosphate + UMP + 2 H(+). Its pathway is glycolipid biosynthesis; lipid IV(A) biosynthesis; lipid IV(A) from (3R)-3-hydroxytetradecanoyl-[acyl-carrier-protein] and UDP-N-acetyl-alpha-D-glucosamine: step 4/6. Functionally, hydrolyzes the pyrophosphate bond of UDP-2,3-diacylglucosamine to yield 2,3-diacylglucosamine 1-phosphate (lipid X) and UMP by catalyzing the attack of water at the alpha-P atom. Involved in the biosynthesis of lipid A, a phosphorylated glycolipid that anchors the lipopolysaccharide to the outer membrane of the cell. The protein is UDP-2,3-diacylglucosamine hydrolase of Xylella fastidiosa (strain M23).